The sequence spans 173 residues: Ribosome maturation factor RimM (173 aa).

The region spanning 98–170 (EGEFYWCDLI…IMTVSPTEGL (73 aa)) is the PRC barrel domain.

This sequence belongs to the RimM family. As to quaternary structure, binds ribosomal protein uS19.

The protein localises to the cytoplasm. Functionally, an accessory protein needed during the final step in the assembly of 30S ribosomal subunit, possibly for assembly of the head region. Essential for efficient processing of 16S rRNA. May be needed both before and after RbfA during the maturation of 16S rRNA. It has affinity for free ribosomal 30S subunits but not for 70S ribosomes. This Geobacter metallireducens (strain ATCC 53774 / DSM 7210 / GS-15) protein is Ribosome maturation factor RimM.